The chain runs to 308 residues: 2-methylisocitrate lyase (308 aa).

A substrate-binding site is contributed by 51-53 (SGA). Mg(2+)-binding residues include aspartate 90 and aspartate 92. Substrate-binding positions include 127 to 128 (CG), arginine 160, glutamate 190, 212 to 214 (NMT), arginine 243, and arginine 272.

Belongs to the isocitrate lyase/PEP mutase superfamily. Methylisocitrate lyase family. As to quaternary structure, homotetramer; dimer of dimers. Mg(2+) is required as a cofactor.

The catalysed reaction is (2S,3R)-3-hydroxybutane-1,2,3-tricarboxylate = pyruvate + succinate. It participates in organic acid metabolism; propanoate degradation. Functionally, involved in the catabolism of short chain fatty acids (SCFA) via the 2-methylcitrate cycle I (propionate degradation route). Catalyzes the thermodynamically favored C-C bond cleavage of (2R,3S)-2-methylisocitrate to yield pyruvate and succinate via an alpha-carboxy-carbanion intermediate. In Aeropyrum pernix (strain ATCC 700893 / DSM 11879 / JCM 9820 / NBRC 100138 / K1), this protein is 2-methylisocitrate lyase.